We begin with the raw amino-acid sequence, 863 residues long: Alanine--tRNA ligase (863 aa).

Residues histidine 552, histidine 556, cysteine 654, and histidine 658 each coordinate Zn(2+).

The protein belongs to the class-II aminoacyl-tRNA synthetase family. It depends on Zn(2+) as a cofactor.

It is found in the cytoplasm. The catalysed reaction is tRNA(Ala) + L-alanine + ATP = L-alanyl-tRNA(Ala) + AMP + diphosphate. Catalyzes the attachment of alanine to tRNA(Ala) in a two-step reaction: alanine is first activated by ATP to form Ala-AMP and then transferred to the acceptor end of tRNA(Ala). Also edits incorrectly charged Ser-tRNA(Ala) and Gly-tRNA(Ala) via its editing domain. This chain is Alanine--tRNA ligase, found in Nitrosomonas europaea (strain ATCC 19718 / CIP 103999 / KCTC 2705 / NBRC 14298).